The chain runs to 355 residues: Anthranilate phosphoribosyltransferase (355 aa).

5-phospho-alpha-D-ribose 1-diphosphate contacts are provided by residues Gly-102, 105–106 (GD), Ser-110, 112–115 (NIST), 130–138 (KHGNRSVSS), and Ser-142. Gly-102 contacts anthranilate. A Mg(2+)-binding site is contributed by Ser-114. An anthranilate-binding site is contributed by Asn-133. Arg-188 is a binding site for anthranilate. Residues Asp-246 and Glu-247 each coordinate Mg(2+).

Belongs to the anthranilate phosphoribosyltransferase family. Homodimer. Mg(2+) is required as a cofactor.

It carries out the reaction N-(5-phospho-beta-D-ribosyl)anthranilate + diphosphate = 5-phospho-alpha-D-ribose 1-diphosphate + anthranilate. It functions in the pathway amino-acid biosynthesis; L-tryptophan biosynthesis; L-tryptophan from chorismate: step 2/5. Its function is as follows. Catalyzes the transfer of the phosphoribosyl group of 5-phosphorylribose-1-pyrophosphate (PRPP) to anthranilate to yield N-(5'-phosphoribosyl)-anthranilate (PRA). In Pectobacterium carotovorum subsp. carotovorum (strain PC1), this protein is Anthranilate phosphoribosyltransferase.